The primary structure comprises 809 residues: Integrin beta pat-3 (809 aa).

Positions 1–19 are cleaved as a signal peptide; sequence MPPSTSLLLLAALLPFALP. Over 20-737 the chain is Extracellular; it reads ASDWKTGEVT…KHKDCPPPVP (718 aa). N-linked (GlcNAc...) asparagine glycans are attached at residues N47, N141, N269, N373, and N400. Positions 153–352 constitute a VWFA domain; sequence DLYYLMDLSY…IFAVTKNNQD (200 aa). 15 disulfides stabilise this stretch: C476–C496, C489–C499, C501–C510, C512–C543, C526–C541, C535–C546, C548–C563, C565–C586, C570–C584, C578–C589, C591–C600, C602–C625, C609–C623, C617–C628, and C630–C644. I-EGF domains follow at residues 476 to 511, 512 to 564, 565 to 601, and 602 to 645; these read CERQ…KYCE, CNRP…EFCE, CDNF…RACE, and CPIS…AKCE. The N-linked (GlcNAc...) asparagine glycan is linked to N530. N672, N693, and N721 each carry an N-linked (GlcNAc...) asparagine glycan. The chain crosses the membrane as a helical span at residues 738 to 758; the sequence is VLAIVLGVIAGIVILGILLLL. Residues 759 to 809 lie on the Cytoplasmic side of the membrane; sequence LWKLLTVLHDRSEYATFNNERLMAKWDTNENPIYKQATTTFKNPVYAGKAN. Y792 is modified (phosphotyrosine).

This sequence belongs to the integrin beta chain family. As to quaternary structure, heterodimer of an alpha and a beta subunit. Interacts with alpha subunit ina-1. Interacts with alpha subunit pat-2. Component of an integrin containing attachment complex, composed of at least pat-2, pat-3, pat-4, pat-6, unc-52, unc-97 and unc-112. May interact with tns-1 (via C-terminus). Post-translationally, phosphorylated. Dephosphorylated by dep-1. As to expression, expressed in body wall muscles (at protein level). Expressed in gonadal sheath cells and spermatheca. Expressed in vulval cells and along the basal laminae that separate the vulval cells from the uterus (at the protein level).

It localises to the cell membrane. The protein localises to the lateral cell membrane. It is found in the basolateral cell membrane. Its subcellular location is the cytoplasm. The protein resides in the myofibril. It localises to the sarcomere. The protein localises to the m line. It is found in the cell junction. Its subcellular location is the focal adhesion. Its function is as follows. Integrin alpha ina-1/beta pat-3 is a receptor for laminin. Integrin alpha pat-2/beta pat-3 recognizes the sequence R-G-D in its ligands. Plays a role in cell migration, morphogenesis and probably in cell-cell interactions. During gonad morphogenesis, involved in distal tip cell (DTC)-mediated guidance of gonad elongation, in maintaining their sharp tapering morphology and in their migration. Component of an integrin containing attachment complex, which is required for muscle development and maintenance. Involved in the assembly of dense bodies and M lines during body wall muscle embryonic development by recruiting one of their components, cpna-1, to integrin-mediated attachment sites. May play a similar role in the assembly of dense bodies in gonadal myoepithelial sheath cells. Probably by acting as a receptor for apoptotic cells, plays a role in the clearance of apoptotic cells during mid-embryogenesis. Required for ovulation. Dephosphorylated, probably within the alpha pat-2/beta pat-3 integrin receptor complex, by the phosphatase dep-1, which leads to down-stream effects including the negative regulation of let-23 signaling and vulval induction. When unphosphosphorylated, recruits the cytoplasmic adapter protein tln-1 to the plasma membrane of secondary vulval precursor cells. This promotes the linking of focal adhesion sites to the F-actin cytoskeleton, and it also acts to restrict the mobility of the let-23 receptor on the plasma membrane of vulval cells which thereby attenuates let-23 signaling. Plays a role in axon regeneration after injury. The chain is Integrin beta pat-3 from Caenorhabditis elegans.